The following is a 120-amino-acid chain: U13-lycotoxin-Ls1a (120 aa).

A signal peptide spans 1–16 (MKTLFVLISILYAVYC). A propeptide spanning residues 17-54 (FSSEEDVDSAYLANELEPVEDINSEQYAALEPKEEQER) is cleaved from the precursor. 4 cysteine pairs are disulfide-bonded: Cys-56–Cys-70, Cys-63–Cys-76, Cys-69–Cys-87, and Cys-78–Cys-85. An Agouti domain is found at 56-95 (CADMGQDCKDDCDCCLNIATCNCWFGRYFCSCTFGDYQTC).

It belongs to the neurotoxin 05 (agouti) family. Post-translationally, contains 6 disulfide bonds. Expressed by the venom gland.

It is found in the secreted. The protein is U13-lycotoxin-Ls1a of Lycosa singoriensis (Wolf spider).